The chain runs to 240 residues: Large ribosomal subunit protein uL1c (240 aa).

This sequence belongs to the universal ribosomal protein uL1 family. Part of the 50S ribosomal subunit.

The protein localises to the plastid. Its subcellular location is the chloroplast. In terms of biological role, binds directly to 23S rRNA. Might be involved in E site tRNA release (Potential). This chain is Large ribosomal subunit protein uL1c (rpl1), found in Cyanidium caldarium (Red alga).